We begin with the raw amino-acid sequence, 2437 residues long: Neurogenic locus notch homolog protein 1 (2437 aa).

The first 20 residues, 1–20 (MNRFLVKLTLLTAASLATVA), serve as a signal peptide directing secretion. 4 consecutive EGF-like domains span residues 21–57 (QGQR…AQCQ), 58–98 (FPNP…RLCL), 101–138 (VNHA…KTCQ), and 139–175 (LADP…QTCR). Residues 21-1726 (QGQRCSEYCQ…GGPPKTGEMY (1706 aa)) are Extracellular-facing. 111 cysteine pairs are disulfide-bonded: Cys25–Cys35, Cys29–Cys45, Cys47–Cys56, Cys62–Cys73, Cys67–Cys86, Cys88–Cys97, Cys105–Cys116, Cys110–Cys126, Cys128–Cys137, Cys143–Cys154, Cys148–Cys163, Cys165–Cys174, Cys181–Cys194, Cys188–Cys203, Cys205–Cys214, Cys221–Cys232, Cys226–Cys242, Cys244–Cys253, Cys260–Cys271, Cys265–Cys280, Cys282–Cys291, Cys298–Cys311, Cys305–Cys320, Cys322–Cys331, Cys338–Cys349, Cys343–Cys358, Cys360–Cys369, Cys375–Cys386, Cys380–Cys397, Cys399–Cys408, Cys415–Cys428, Cys422–Cys437, Cys439–Cys448, Cys455–Cys466, Cys460–Cys475, Cys477–Cys486, Cys493–Cys503, Cys498–Cys512, Cys514–Cys523, Cys530–Cys541, Cys535–Cys550, Cys552–Cys561, Cys568–Cys578, Cys573–Cys587, Cys589–Cys598, Cys605–Cys616, Cys610–Cys625, Cys627–Cys636, Cys643–Cys653, Cys648–Cys662, Cys664–Cys673, Cys680–Cys691, Cys685–Cys700, Cys702–Cys711, Cys718–Cys728, Cys723–Cys737, Cys739–Cys748, Cys755–Cys766, Cys760–Cys775, Cys777–Cys786, Cys793–Cys804, Cys798–Cys813, Cys815–Cys824, Cys831–Cys842, Cys836–Cys853, Cys855–Cys864, Cys871–Cys882, Cys876–Cys891, Cys893–Cys902, Cys909–Cys920, Cys914–Cys929, Cys931–Cys940, Cys947–Cys958, Cys952–Cys967, Cys969–Cys978, Cys985–Cys996, Cys990–Cys1005, Cys1007–Cys1016, Cys1023–Cys1034, Cys1028–Cys1043, Cys1045–Cys1054, Cys1061–Cys1072, Cys1066–Cys1081, Cys1083–Cys1092, Cys1099–Cys1120, Cys1114–Cys1129, Cys1131–Cys1140, Cys1147–Cys1158, Cys1152–Cys1167, Cys1169–Cys1178, Cys1185–Cys1196, Cys1190–Cys1205, Cys1207–Cys1216, Cys1223–Cys1242, Cys1236–Cys1251, Cys1253–Cys1262, Cys1269–Cys1282, Cys1274–Cys1291, Cys1293–Cys1302, Cys1309–Cys1320, Cys1314–Cys1332, Cys1334–Cys1343, Cys1350–Cys1361, Cys1355–Cys1370, Cys1372–Cys1381, Cys1389–Cys1400, Cys1394–Cys1411, Cys1413–Cys1422, Cys1447–Cys1470, Cys1452–Cys1465, and Cys1461–Cys1477. Residues 177-215 (DVNECAVSPSPCRNGGTCINEVGSYLCRCPPEYTGPHCQ) enclose the EGF-like 5; calcium-binding domain. Residues 217-254 (LYQPCLPSPCRSGGTCVQTSDTTHTCSCLPGFTGQTCE) enclose the EGF-like 6 domain. O-linked (Fuc...) threonine; alternate glycosylation is present at Thr231. The O-linked (GalNAc...) threonine; alternate glycan is linked to Thr231. The EGF-like 7; calcium-binding domain occupies 256–292 (NVDDCTQHACENGGPCIDGINTYNCHCDKHWTGQYCT). Residues 294 to 332 (DVDECELSPNACQNGGTCHNTIGGFHCVCVNGWTGDDCS) form the EGF-like 8; calcium-binding domain. Residues 334–370 (NIDDCASAACSHGATCHDRVASFFCECPHGRTGLLCH) enclose the EGF-like 9; calcium-binding domain. In terms of domain architecture, EGF-like 10 spans 371-409 (LDDACISNPCQKGSNCDTNPVSGKAICTCPPGYTGSACN). One can recognise an EGF-like 11; calcium-binding domain in the interval 411-449 (DIDECSLGANPCEHGGRCLNTKGSFQCKCLQGYEGPRCE). In terms of domain architecture, EGF-like 12; calcium-binding spans 451-487 (DVNECKSNPCQNDATCLDQIGGFHCICMPGYEGVFCQ). One can recognise an EGF-like 13; calcium-binding domain in the interval 489–524 (NSDDCASQPCLNGKCIDKINSFHCECPKGFSGSLCQ). An EGF-like 14; calcium-binding domain is found at 526 to 562 (DVDECASTPCKNGAKCTDGPNKYTCECTPGFSGIHCE). The EGF-like 15; calcium-binding domain occupies 564-599 (DINECASSPCHYGVCRDGVASFTCDCRPGYTGRLCE). One can recognise an EGF-like 16; calcium-binding domain in the interval 601–637 (NINECLSQPCRNGGTCQDRENAYICTCPKGTTGVNCE). One can recognise an EGF-like 17; calcium-binding domain in the interval 639–674 (NIDDCKRKPCDYGKCIDKINGYECVCEPGYSGSMCN). Residues 676–712 (NIDDCALNPCHNGGTCIDGVNSFTCLCPDGFRDATCL) form the EGF-like 18; calcium-binding domain. Residues 714 to 749 (QHNECSSNPCIHGSCLDQINSYRCVCEAGWMGRNCD) enclose the EGF-like 19; calcium-binding domain. The 37-residue stretch at 751–787 (NINECLSNPCVNGGTCKDMTSGYLCTCRAGFSGPNCQ) folds into the EGF-like 20; calcium-binding domain. One can recognise an EGF-like 21; calcium-binding domain in the interval 789 to 825 (NINECASNPCLNQGSCIDDVAGFKCNCMLPYTGEVCE). One can recognise an EGF-like 22 domain in the interval 827–865 (VLAPCSPRPCKNGGVCRESEDFQSFSCNCPAGWQGQTCE). In terms of domain architecture, EGF-like 23; calcium-binding spans 867-903 (DINECVRNPCTNGGVCENLRGGFQCRCNPGFTGALCE). Residues 905 to 941 (DIDDCEPNPCSNGGVCQDRVNGFVCVCLAGFRGERCA) form the EGF-like 24; calcium-binding domain. The EGF-like 25; calcium-binding domain maps to 943 to 979 (DIDECVSAPCRNGGNCTDCVNSYTCSCPAGFSGINCE). Asn957 carries an N-linked (GlcNAc...) asparagine glycan. An EGF-like 26 domain is found at 981–1017 (NTPDCTESSCFNGGTCVDGISSFSCVCLPGFTGNYCQ). In terms of domain architecture, EGF-like 27; calcium-binding spans 1019–1055 (DVNECDSRPCQNGGSCQDGYGTYKCTCPHGYTGLNCQ). 2 consecutive EGF-like domains span residues 1057–1093 (LVRW…IYCD) and 1095–1141 (PSVS…SYCQ). Residues 1143 to 1179 (QVDECQPNPCQNGATCTDYLGGYSCECVPGYHGMNCS) enclose the EGF-like 30; calcium-binding domain. N-linked (GlcNAc...) asparagine glycosylation is present at Asn1177. In terms of domain architecture, EGF-like 31; calcium-binding spans 1181 to 1217 (EINECLSQPCQNGGTCIDLVNTYKCSCPRGTQGVHCE). In terms of domain architecture, EGF-like 32; calcium-binding spans 1219 to 1263 (DIDDCSPSVDPLTGEPRCFNGGRCVDRVGGYGCVCPAGFVGERCE). 4 consecutive EGF-like domains span residues 1265 to 1303 (DVNE…KRCE), 1305 to 1344 (VFNG…SSCE), 1346 to 1382 (DSQS…HECQ), and 1385 to 1423 (MDSP…LLCH). O-linked (Fuc...) threonine; alternate glycosylation is present at Thr1399. An O-linked (GalNAc...) threonine; alternate glycan is attached at Thr1399. LNR repeat units follow at residues 1447 to 1487 (CEIA…PWQN), 1488 to 1525 (CSAA…LEGQ), and 1526 to 1566 (CNPL…VPQK). Asn1487 is a glycosylation site (N-linked (GlcNAc...) asparagine). 6 cysteine pairs are disulfide-bonded: Cys1488–Cys1512, Cys1494–Cys1507, Cys1503–Cys1519, Cys1526–Cys1552, Cys1534–Cys1547, and Cys1543–Cys1559. Residue Asn1585 is glycosylated (N-linked (GlcNAc...) asparagine). Residues 1727–1747 (PMFLVLLALAVLALAAVGVVV) traverse the membrane as a helical segment. Residues 1748 to 2437 (SRKRKREHGQ…QMNHIPEAFK (690 aa)) lie on the Cytoplasmic side of the membrane. The segment at 1770–1790 (KKKRREPVGEDSVGLKPLKNS) is disordered. ANK repeat units follow at residues 1867–1910 (DGFT…NLHN), 1915–1944 (TGET…DANV), 1948–1978 (MGRT…DLDA), 1982–2011 (DGTT…DPNA), 2015–2044 (SGKS…NKDL), and 2048–2077 (KEET…NRDI). Disordered stretches follow at residues 2127 to 2174 (IKPS…GGIM) and 2356 to 2437 (RMAP…EAFK). Residues 2356–2387 (RMAPPISSTQFLTPPSQHSYSNPMDNTPNHQQ) show a composition bias toward polar residues. Low complexity predominate over residues 2396 to 2411 (PSAGSPDQWSSSSPHS). Residues 2412–2429 (NLSDWSEGISSPPTSMQM) are compositionally biased toward polar residues.

The protein belongs to the NOTCH family. Synthesized in the endoplasmic reticulum as an inactive form which is proteolytically cleaved by a furin-like convertase in the trans-Golgi network before it reaches the plasma membrane to yield an active, ligand-accessible form. Cleavage results in a C-terminal fragment N(TM) and a N-terminal fragment N(EC). Following ligand binding, it is cleaved by adam17 to yield a membrane-associated intermediate fragment called notch extracellular truncation (NEXT). Following endocytosis, this fragment is then cleaved by presenilin dependent gamma-secretase to release a Notch-derived peptide containing the intracellular domain (NICD) from the membrane. In terms of processing, O-glycosylated on the EGF-like domains. Contains both O-linked fucose and O-linked glucose. O-linked glycosylation by galnt11 is involved in determination of left/right symmetry: glycosylation promotes activation of notch1, possibly by promoting cleavage by adam17, modulating the balance between motile and immotile (sensory) cilia at the left-right organiser (LRO).

The protein localises to the cell membrane. The protein resides in the nucleus. In terms of biological role, functions as a receptor for membrane-bound ligands Jagged-1 (JAG1), Jagged-2 (JAG2) and Delta-1 (DLL1) to regulate cell-fate determination. Upon ligand activation through the released notch intracellular domain (NICD) it forms a transcriptional activator complex with RBPJ/RBPSUH and activates genes of the enhancer of split locus. Affects the implementation of differentiation, proliferation and apoptotic programs. Involved in angiogenesis; negatively regulates endothelial cell proliferation and migration and angiogenic sprouting. Involved in the maturation of both CD4(+) and CD8(+) cells in the thymus. Important for follicular differentiation and possibly cell fate selection within the follicle. During cerebellar development, functions as a receptor for neuronal DNER and is involved in the differentiation of Bergmann glia. Represses neuronal and myogenic differentiation. May play an essential role in postimplantation development, probably in some aspect of cell specification and/or differentiation. May be involved in mesoderm development, somite formation and neurogenesis. Involved in determination of left/right symmetry by modulating the balance between motile and immotile (sensory) cilia at the left-right organiser (LRO). The sequence is that of Neurogenic locus notch homolog protein 1 (notch1a) from Danio rerio (Zebrafish).